Reading from the N-terminus, the 204-residue chain is Minor allergen Cla h 7 (204 aa).

The Flavodoxin-like domain maps to 5-195; it reads IAIIFYSTWG…ELTAQGKAFY (191 aa).

This sequence belongs to the WrbA family.

Its subcellular location is the cytoplasm. This Davidiella tassiana (Mycosphaerella tassiana) protein is Minor allergen Cla h 7 (CLAH7).